The primary structure comprises 1379 residues: MAERANLVFHNKVIDGTAIKRLISRLIDHFGMAYTSHILDQVKTLGFQQATATSISLGIDDLLTIPSKGWLVQDAEQQSWILEKHHHYGNVHAVEKLRQSIEIWYATSEYLRQEMNPNFRMTDPFNPVHMMSFSGARGNASQVHQLVGMRGLMSDPQGQMIDLPIQSNLREGLSLTEYIISCYGARKGVVDTAVRTSDAGYLTRRLVEVVQHIVVRRTDCGTIRGISVSPRNKNRMMSERIFIQTLIGRVLADDIYIGSRCVAFRNQDLGIGLVNRLITFGTQSISIRTPFTCRSTSWICRLCYGRSPTHGDLVELGEAVGIIAGQSIGEPGTQLTLRTFHTGGVFTGGTAEHVRAPYNGKIKFNEDLVHPTRTRHGHPAFLCYIDLSVIIESEDIIHSVTIPPKSFLLVQNDQYVESEQVIAEIREGTYTFHFKERVRKYIYSDSEGEMHWSTDVSHAPEFTYSNVHLLPKTSHLWILSGGSCGSSLILFSIHKDQDQMNIPFLSAERKSISSLSVNNDQTSQKFFSSDFADKKKLGISYYSELNGNLGTSHYNFIYSAIFQENSDLLAKRRRNRFLIPFQSIQEQEKEFIPHSGISVEIPINGIFRRNSIFAFFDDPRYRRKSSGILKYGALKADSIIQKEDMIEYRGVQKFKTKYEMKVDRFFFIPEEVHILPESSAIMVQNYSIIGVDTRLTLNIRSQVGGLIRVERKKKRVELKIFSGDIHFPDKTDKISRHSGILIPPGRGKTNSKESKKFKNWIYVQRITPTKKKFFVLVRPVATYEIADSINLATLFPQDLFREKDNIQLRVFNYILYGNGKPTRGIADTSIQLVRTCLVLNWDQDNKNSALEAVRAFFVEVSTKGLIRDFIRIGLVKSHISYIRKRKNSPDSGFISADHMNPFYPISPKAGILQQSLRQNRGTIRMFLNRNKESQSLLILSSSNCFRMGPFNHVKYHNVINQSIKKNTLITIKNSSGPLGTATQISNFYSFLPLLTYNQISLIKYLQLDNFKYIFQVINSYLIDENGRIFNLDPYSNVVLNPFKLNWYFLHQNYHHNYCEETSTIISLGQFFCENVCIAKKEPHLKSGQVLIVQRDSVVIRSAKPYLATPGAKVHGHYREILYEGDTLVTFIYEKSRSGDITQGLPKVEQVLEVRSIDSISLNLEKRIKGWNKCITRILGIPWGFLIGAELTIVQSRISLVNKIQKVYRSQGVQIHNRHIEIIVRQITSKVLVSEEGMSNVFLPGELIGLLRAERTGRALEEAICYRAVLLGITRASLNTQSFISEASFQETARVLAKAALRGRIDWLKGLKENVVLGGVIPAGTGFNKGLVHCSRQHTNILLEKKTKNLALFEGDMRDILFYHREFCESSISKSDFSRI.

Zn(2+)-binding residues include Cys-220, Cys-293, Cys-300, and Cys-303.

Belongs to the RNA polymerase beta' chain family. RpoC2 subfamily. In plastids the minimal PEP RNA polymerase catalytic core is composed of four subunits: alpha, beta, beta', and beta''. When a (nuclear-encoded) sigma factor is associated with the core the holoenzyme is formed, which can initiate transcription. Zn(2+) is required as a cofactor.

Its subcellular location is the plastid. The protein localises to the chloroplast. The enzyme catalyses RNA(n) + a ribonucleoside 5'-triphosphate = RNA(n+1) + diphosphate. DNA-dependent RNA polymerase catalyzes the transcription of DNA into RNA using the four ribonucleoside triphosphates as substrates. The polypeptide is DNA-directed RNA polymerase subunit beta'' (Capsella bursa-pastoris (Shepherd's purse)).